A 294-amino-acid polypeptide reads, in one-letter code: Acetylglutamate kinase (294 aa).

Residues 67 to 68 (GG), R89, and N193 each bind substrate.

The protein belongs to the acetylglutamate kinase family. ArgB subfamily.

The protein localises to the cytoplasm. The enzyme catalyses N-acetyl-L-glutamate + ATP = N-acetyl-L-glutamyl 5-phosphate + ADP. It participates in amino-acid biosynthesis; L-arginine biosynthesis; N(2)-acetyl-L-ornithine from L-glutamate: step 2/4. Functionally, catalyzes the ATP-dependent phosphorylation of N-acetyl-L-glutamate. This Leptospira interrogans serogroup Icterohaemorrhagiae serovar copenhageni (strain Fiocruz L1-130) protein is Acetylglutamate kinase.